The following is a 250-amino-acid chain: Endonuclease NucS (250 aa).

This sequence belongs to the NucS endonuclease family.

It is found in the cytoplasm. Functionally, cleaves both 3' and 5' ssDNA extremities of branched DNA structures. This is Endonuclease NucS from Sulfolobus acidocaldarius (strain ATCC 33909 / DSM 639 / JCM 8929 / NBRC 15157 / NCIMB 11770).